A 185-amino-acid polypeptide reads, in one-letter code: CASP-like protein 5A1 (185 aa).

The Cytoplasmic portion of the chain corresponds to Met1 to Thr45. The helical transmembrane segment at Leu46–Met66 threads the bilayer. Over Leu67–Ala76 the chain is Extracellular. Residues Phe77–Ile97 traverse the membrane as a helical segment. Topologically, residues Asp98 to Asp121 are cytoplasmic. Residues Gly122–Ile142 form a helical membrane-spanning segment. The Extracellular portion of the chain corresponds to Gly143–Ala160. The helical transmembrane segment at Ile161–Leu181 threads the bilayer. The Cytoplasmic segment spans residues Leu182–Leu185.

Belongs to the Casparian strip membrane proteins (CASP) family. Homodimer and heterodimers.

The protein resides in the cell membrane. The chain is CASP-like protein 5A1 from Picea sitchensis (Sitka spruce).